We begin with the raw amino-acid sequence, 263 residues long: LIM and SH3 domain protein 1 (263 aa).

An N-acetylmethionine modification is found at Met1. The LIM zinc-binding domain occupies Pro3–Thr63. Lys42 carries the N6-acetyllysine modification. Nebulin repeat units follow at residues Met64 to Gly95 and Gly97 to Met131. Thr68 carries the phosphothreonine modification. At Lys75 the chain carries N6-methyllysine. Residue Ser99 is modified to Phosphoserine. Thr104 carries the phosphothreonine modification. Lys112 carries the N6-succinyllysine modification. Phosphoserine occurs at positions 118 and 134. The disordered stretch occupies residues Tyr122–Lys207. The segment covering Asp148–Gln162 has biased composition (polar residues). The 60-residue stretch at Gly204–Ile263 folds into the SH3 domain.

In terms of assembly, interacts with F-actin. Interacts with ANKRD54. Interacts with KBTBD10. Post-translationally, phosphorylated. As to expression, expressed in a wide range of tissues (but not the heart or skeletal muscle), the expression is specific for certain actin-rich cell types within these tissues. Expression is prominent in the cortical regions of ion-transporting duct cells in the pancreas, in the salivary parotid gland and in certain F-actin-rich cells in the distal tubule/collecting duct. In primary cultures of gastric fibroblasts, expression is mainly within the tips of lamellipodia and at the leading edges of membrane ruffles.

The protein localises to the cytoplasm. Its subcellular location is the cell cortex. It is found in the cytoskeleton. Its function is as follows. Plays an important role in the regulation of dynamic actin-based, cytoskeletal activities. Agonist-dependent changes in LASP1 phosphorylation may also serve to regulate actin-associated ion transport activities, not only in the parietal cell but also in certain other F-actin-rich secretory epithelial cell types. This chain is LIM and SH3 domain protein 1, found in Rattus norvegicus (Rat).